A 109-amino-acid chain; its full sequence is uncharacterized protein (109 aa).

This is an uncharacterized protein from Escherichia coli (strain K12).